The sequence spans 130 residues: Small ribosomal subunit protein uS8 (130 aa).

Belongs to the universal ribosomal protein uS8 family. In terms of assembly, part of the 30S ribosomal subunit.

One of the primary rRNA binding proteins, it binds directly to 16S rRNA central domain where it helps coordinate assembly of the platform of the 30S subunit. The polypeptide is Small ribosomal subunit protein uS8 (Methanobrevibacter smithii (strain ATCC 35061 / DSM 861 / OCM 144 / PS)).